Reading from the N-terminus, the 262-residue chain is Acyl-[acyl-carrier-protein]--UDP-N-acetylglucosamine O-acyltransferase (262 aa).

Belongs to the transferase hexapeptide repeat family. LpxA subfamily. Homotrimer.

The protein localises to the cytoplasm. It catalyses the reaction a (3R)-hydroxyacyl-[ACP] + UDP-N-acetyl-alpha-D-glucosamine = a UDP-3-O-[(3R)-3-hydroxyacyl]-N-acetyl-alpha-D-glucosamine + holo-[ACP]. It functions in the pathway glycolipid biosynthesis; lipid IV(A) biosynthesis; lipid IV(A) from (3R)-3-hydroxytetradecanoyl-[acyl-carrier-protein] and UDP-N-acetyl-alpha-D-glucosamine: step 1/6. Involved in the biosynthesis of lipid A, a phosphorylated glycolipid that anchors the lipopolysaccharide to the outer membrane of the cell. The chain is Acyl-[acyl-carrier-protein]--UDP-N-acetylglucosamine O-acyltransferase from Escherichia coli O157:H7.